The chain runs to 222 residues: Adenylate kinase (222 aa).

10–15 (GAGKGT) contacts ATP. Residues 30 to 59 (STGDMLRAAVKAGTPLGIEAKKVMDAGGLV) form an NMP region. Residues Thr-31, Arg-36, 57-59 (GLV), 85-88 (GFPR), and Gln-92 contribute to the AMP site. The LID stretch occupies residues 122–159 (GRRVHVASGRTYHVKYNPPKTEGVDDESGEPLIQRDDD). ATP-binding positions include Arg-123 and 132-133 (TY). The segment at 138 to 160 (NPPKTEGVDDESGEPLIQRDDDK) is disordered. 2 residues coordinate AMP: Arg-156 and Arg-167. ATP is bound at residue Gly-207.

This sequence belongs to the adenylate kinase family. As to quaternary structure, monomer.

It is found in the cytoplasm. The catalysed reaction is AMP + ATP = 2 ADP. It participates in purine metabolism; AMP biosynthesis via salvage pathway; AMP from ADP: step 1/1. Functionally, catalyzes the reversible transfer of the terminal phosphate group between ATP and AMP. Plays an important role in cellular energy homeostasis and in adenine nucleotide metabolism. The sequence is that of Adenylate kinase from Ralstonia pickettii (strain 12J).